The following is a 318-amino-acid chain: O-glucosyltransferase LpsA (318 aa).

It belongs to the glycosyltransferase 90 family.

It participates in protein modification; protein glycosylation. Involved in lipopolysaccharide core biosynthesis. The protein is O-glucosyltransferase LpsA (lpsA) of Dichelobacter nodosus (Bacteroides nodosus).